A 132-amino-acid polypeptide reads, in one-letter code: Transcription antitermination protein NusB (132 aa).

The protein belongs to the NusB family.

Involved in transcription antitermination. Required for transcription of ribosomal RNA (rRNA) genes. Binds specifically to the boxA antiterminator sequence of the ribosomal RNA (rrn) operons. This chain is Transcription antitermination protein NusB, found in Campylobacter jejuni subsp. jejuni serotype O:6 (strain 81116 / NCTC 11828).